A 344-amino-acid polypeptide reads, in one-letter code: Methionine import ATP-binding protein MetN 1 (344 aa).

An ABC transporter domain is found at 2–241 (IEIRNISQRF…PHHEVTRALI (240 aa)). Position 38-45 (38-45 (GRSGAGKS)) interacts with ATP.

It belongs to the ABC transporter superfamily. Methionine importer (TC 3.A.1.24) family. In terms of assembly, the complex is composed of two ATP-binding proteins (MetN), two transmembrane proteins (MetI) and a solute-binding protein (MetQ).

The protein localises to the cell inner membrane. It carries out the reaction L-methionine(out) + ATP + H2O = L-methionine(in) + ADP + phosphate + H(+). The enzyme catalyses D-methionine(out) + ATP + H2O = D-methionine(in) + ADP + phosphate + H(+). Part of the ABC transporter complex MetNIQ involved in methionine import. Responsible for energy coupling to the transport system. The chain is Methionine import ATP-binding protein MetN 1 from Paraburkholderia xenovorans (strain LB400).